A 530-amino-acid polypeptide reads, in one-letter code: Estrogen receptor beta (530 aa).

The tract at residues 1 to 148 is modulating; sequence MDIKNSPSSL…GPSSKRDAHF (148 aa). A Phosphoserine; alternate modification is found at Ser61. O-linked (GlcNAc) serine; alternate glycosylation occurs at Ser61. Phosphoserine; by MAPK occurs at positions 87 and 105. 2 consecutive NR C4-type zinc fingers follow at residues 149–169 and 185–209; these read CAVC…CEGC and CPAT…LRKC. The nuclear receptor DNA-binding region spans 149 to 214; it reads CAVCSDYASG…RLRKCYEVGM (66 aa). The NR LBD domain maps to 264 to 498; that stretch reads SPEQLVLTLL…DLLLEMMNAH (235 aa). Positions 507–530 are disordered; it reads ITGSECSPAEDSKSTEGSQNPQSP. Residues 521–530 show a composition bias toward polar residues; it reads TEGSQNPQSP.

This sequence belongs to the nuclear hormone receptor family. NR3 subfamily. As to quaternary structure, binds DNA as a homodimer. Can form a heterodimer with ESR1. Interacts with NCOA1, NCOA3, NCOA5 and NCOA6 coactivators, leading to a strong increase of transcription of target genes. Interacts with UBE1C and AKAP13. Interacts with DNTTIP2. Interacts with CCDC62 in the presence of estradiol/E2; this interaction seems to enhance the transcription of target genes. Interacts with DNAAF4. Interacts with PRMT2. Interacts with CCAR2 (via N-terminus) in a ligand-independent manner. Interacts with RBM39, in the presence of estradiol (E2). Interacts with STUB1/CHIP. In terms of processing, phosphorylation at Ser-87 and Ser-105 recruits NCOA1.

It is found in the nucleus. Its function is as follows. Nuclear hormone receptor. Binds estrogens with an affinity similar to that of ESR1/ER-alpha, and activates expression of reporter genes containing estrogen response elements (ERE) in an estrogen-dependent manner. In Callithrix jacchus (White-tufted-ear marmoset), this protein is Estrogen receptor beta (ESR2).